The chain runs to 241 residues: Peroxisomal membrane protein 11C (241 aa).

The Cytoplasmic segment spans residues 1-122 (MALLNRLASA…ADAKVLRVDS (122 aa)). Residues 123–149 (AWWWTLNTALWTLSLLLGAVKALWTML) form a helical membrane-spanning segment. Residues 150–211 (KLRQKLRSPT…GVLWAGRFPP (62 aa)) lie on the Lumenal side of the membrane. A helical transmembrane segment spans residues 212 to 227 (WLVGLMGTISSILSTC). Residues 228-241 (QAVRAGRQAEADSP) are Cytoplasmic-facing.

It belongs to the peroxin-11 family. Homodimer. Heterodimer with either PEX11A or PEX11B. Interacts with FIS1. Expressed in liver and at much lower levels in heart, kidney and testis.

The protein localises to the peroxisome membrane. Functionally, promotes membrane protrusion and elongation on the peroxisomal surface. The sequence is that of Peroxisomal membrane protein 11C (Pex11g) from Mus musculus (Mouse).